Here is a 156-residue protein sequence, read N- to C-terminus: Small ribosomal subunit protein uS7 (156 aa).

This sequence belongs to the universal ribosomal protein uS7 family. In terms of assembly, part of the 30S ribosomal subunit. Contacts proteins S9 and S11.

Its function is as follows. One of the primary rRNA binding proteins, it binds directly to 16S rRNA where it nucleates assembly of the head domain of the 30S subunit. Is located at the subunit interface close to the decoding center, probably blocks exit of the E-site tRNA. This is Small ribosomal subunit protein uS7 from Shewanella baltica (strain OS223).